Here is a 144-residue protein sequence, read N- to C-terminus: Small ribosomal subunit protein eS19A (144 aa).

The tract at residues 83–102 (VNRGMRPSHHRDGSGSVQRK) is disordered.

This sequence belongs to the eukaryotic ribosomal protein eS19 family. Component of the small ribosomal subunit (SSU). Mature yeast ribosomes consist of a small (40S) and a large (60S) subunit. The 40S small subunit contains 1 molecule of ribosomal RNA (18S rRNA) and at least 33 different proteins. The large 60S subunit contains 3 rRNA molecules (25S, 5.8S and 5S rRNA) and at least 46 different proteins.

The protein resides in the cytoplasm. It is found in the nucleus. Its subcellular location is the nucleolus. Its function is as follows. Component of the ribosome, a large ribonucleoprotein complex responsible for the synthesis of proteins in the cell. The small ribosomal subunit (SSU) binds messenger RNAs (mRNAs) and translates the encoded message by selecting cognate aminoacyl-transfer RNA (tRNA) molecules. The large subunit (LSU) contains the ribosomal catalytic site termed the peptidyl transferase center (PTC), which catalyzes the formation of peptide bonds, thereby polymerizing the amino acids delivered by tRNAs into a polypeptide chain. The nascent polypeptides leave the ribosome through a tunnel in the LSU and interact with protein factors that function in enzymatic processing, targeting, and the membrane insertion of nascent chains at the exit of the ribosomal tunnel. eS19 is required for proper maturation of the small (40S) ribosomal subunit. Binds to 40S pre-ribosomal particles, probably required after association of NOC4 but before association of ENP1, TSR1 and RIO2 with 20/21S pre-rRNA. This Schizosaccharomyces pombe (strain 972 / ATCC 24843) (Fission yeast) protein is Small ribosomal subunit protein eS19A (rps1901).